The chain runs to 150 residues: MNVILLDKIANLGNLGDQVSVKAGYARNFLLPQGKAVVANTANTEVFEARRADLEAKLAADLAAATQRAEKISALESVVIASKAGDEGKLFGSIGNRDIADAVTAAGVELAKSEVRLPLGAIRTTGEFEVEVQVHTEVKAIVKLSVVAEA.

This sequence belongs to the bacterial ribosomal protein bL9 family.

Binds to the 23S rRNA. The polypeptide is Large ribosomal subunit protein bL9 (Shewanella pealeana (strain ATCC 700345 / ANG-SQ1)).